A 29-amino-acid polypeptide reads, in one-letter code: GWTLNSAGYLLGPHAVDNHRSLNDKHGLA.

A29 bears the Alanine amide mark.

It belongs to the galanin family.

The protein localises to the secreted. Functionally, contracts smooth muscle of the gastrointestinal and genitourinary tract, regulates growth hormone release, modulates insulin release, and may be involved in the control of adrenal secretion. The chain is Galanin (gal) from Amia calva (Bowfin).